Reading from the N-terminus, the 163-residue chain is Shikimate kinase (163 aa).

Position 10–15 (10–15 (GVGKSS)) interacts with ATP. Ser-14 is a binding site for Mg(2+). Residues Asp-28, Arg-52, and Gly-75 each contribute to the substrate site. Residue Arg-116 coordinates ATP. Residue Arg-134 coordinates substrate. Residue Arg-151 participates in ATP binding.

This sequence belongs to the shikimate kinase family. As to quaternary structure, monomer. Mg(2+) is required as a cofactor.

The protein resides in the cytoplasm. The enzyme catalyses shikimate + ATP = 3-phosphoshikimate + ADP + H(+). It participates in metabolic intermediate biosynthesis; chorismate biosynthesis; chorismate from D-erythrose 4-phosphate and phosphoenolpyruvate: step 5/7. In terms of biological role, catalyzes the specific phosphorylation of the 3-hydroxyl group of shikimic acid using ATP as a cosubstrate. In Streptococcus thermophilus (strain ATCC BAA-491 / LMD-9), this protein is Shikimate kinase.